A 564-amino-acid chain; its full sequence is Putative zinc metalloproteinase in scaA 5'region (564 aa).

The 564-residue stretch at 1 to 564 folds into the Peptidase M13 domain; the sequence is MTRLQDDFYD…KEADFSAEEF (564 aa). A Zn(2+)-binding site is contributed by H478. The active site involves E479. Positions 482 and 538 each coordinate Zn(2+). D542 (proton donor) is an active-site residue.

It belongs to the peptidase M13 family. It depends on Zn(2+) as a cofactor.

This Streptococcus gordonii (strain Challis / ATCC 35105 / BCRC 15272 / CH1 / DL1 / V288) protein is Putative zinc metalloproteinase in scaA 5'region.